The primary structure comprises 342 residues: Predicted GPI-anchored protein 54 (342 aa).

Residues 1 to 16 form the signal peptide; the sequence is MRANYLLLLAATAVQA. 3 N-linked (GlcNAc...) asparagine glycosylation sites follow: asparagine 25, asparagine 105, and asparagine 151. A lipid anchor (GPI-anchor amidated glycine) is attached at glycine 314. A propeptide spans 315–342 (removed in mature form); the sequence is ASQSHPISSYSNYTISDYAPPISSYYSL. The N-linked (GlcNAc...) asparagine glycan is linked to asparagine 326.

The protein localises to the cell membrane. The chain is Predicted GPI-anchored protein 54 (PGA54) from Candida albicans (strain SC5314 / ATCC MYA-2876) (Yeast).